The chain runs to 182 residues: Flavin prenyltransferase UbiX (182 aa).

FMN-binding positions include 9-11, S35, 86-89, and R121; these read GAS and SIKT. Residues Y151 and R167 each coordinate dimethylallyl phosphate.

Belongs to the UbiX/PAD1 family.

The catalysed reaction is dimethylallyl phosphate + FMNH2 = prenylated FMNH2 + phosphate. In terms of biological role, flavin prenyltransferase that catalyzes the synthesis of the prenylated FMN cofactor (prenyl-FMN) for 4-hydroxy-3-polyprenylbenzoic acid decarboxylase UbiD. The prenyltransferase is metal-independent and links a dimethylallyl moiety from dimethylallyl monophosphate (DMAP) to the flavin N5 and C6 atoms of FMN. The polypeptide is Flavin prenyltransferase UbiX (Archaeoglobus fulgidus (strain ATCC 49558 / DSM 4304 / JCM 9628 / NBRC 100126 / VC-16)).